A 180-amino-acid polypeptide reads, in one-letter code: NTLLVCAAVIRFRHLRSKVTNFFVISLAVSDLLVAVLVMPWKAVAEIAGFWPFGSFCNIWVAFDIMCSTASILNLCVISVDRYWAISSPFRYERKMTPKAAFILIGVAWTLSVLISFIPVQLSWHKAKPTSPPDGNATSLDETVDNCDSSLSRTYSISSSLVNFYNPVAIMXVTYTRIHR.

A helical membrane pass occupies residues 1-10; sequence NTLLVCAAVI. At 11-21 the chain is on the cytoplasmic side; the sequence is RFRHLRSKVTN. A helical membrane pass occupies residues 22–48; it reads FFVISLAVSDLLVAVLVMPWKAVAEIA. At 49 to 57 the chain is on the extracellular side; the sequence is GFWPFGSFC. A disulfide bridge connects residues Cys-57 and Cys-147. Residues 58-80 traverse the membrane as a helical segment; that stretch reads NIWVAFDIMCSTASILNLCVISV. The Cytoplasmic portion of the chain corresponds to 81 to 99; sequence DRYWAISSPFRYERKMTPK. A helical transmembrane segment spans residues 100–124; the sequence is AAFILIGVAWTLSVLISFIPVQLSW. Residues 125-153 are Extracellular-facing; that stretch reads HKAKPTSPPDGNATSLDETVDNCDSSLSR. The N-linked (GlcNAc...) asparagine glycan is linked to Asn-136. Residues 154–179 traverse the membrane as a helical segment; that stretch reads TYSISSSLVNFYNPVAIMXVTYTRIH. Residue Arg-180 is a topological domain, cytoplasmic.

It belongs to the G-protein coupled receptor 1 family. As to quaternary structure, interacts with DNAJC14 via its C-terminus. Interacts with DRD2. Interacts with DORIP1.

The protein localises to the cell membrane. It localises to the endoplasmic reticulum membrane. It is found in the cell projection. Its subcellular location is the cilium membrane. Functionally, dopamine receptor whose activity is mediated by G proteins which activate adenylyl cyclase. In Oryctolagus cuniculus (Rabbit), this protein is D(1A) dopamine receptor (DRD1).